Here is a 380-residue protein sequence, read N- to C-terminus: Erythronate-4-phosphate dehydrogenase (380 aa).

Serine 45 and threonine 66 together coordinate substrate. NAD(+) is bound by residues 126-127, aspartate 146, threonine 175, 206-208, and aspartate 232; these read QV and ASR. Arginine 208 is an active-site residue. Residue glutamate 237 is part of the active site. Histidine 254 acts as the Proton donor in catalysis. Glycine 257 is an NAD(+) binding site. Tyrosine 258 is a substrate binding site.

It belongs to the D-isomer specific 2-hydroxyacid dehydrogenase family. PdxB subfamily. Homodimer.

The protein resides in the cytoplasm. The enzyme catalyses 4-phospho-D-erythronate + NAD(+) = (R)-3-hydroxy-2-oxo-4-phosphooxybutanoate + NADH + H(+). It functions in the pathway cofactor biosynthesis; pyridoxine 5'-phosphate biosynthesis; pyridoxine 5'-phosphate from D-erythrose 4-phosphate: step 2/5. In terms of biological role, catalyzes the oxidation of erythronate-4-phosphate to 3-hydroxy-2-oxo-4-phosphonooxybutanoate. The polypeptide is Erythronate-4-phosphate dehydrogenase (Pseudomonas paraeruginosa (strain DSM 24068 / PA7) (Pseudomonas aeruginosa (strain PA7))).